Here is a 357-residue protein sequence, read N- to C-terminus: Phosphoribosylformylglycinamidine cyclo-ligase (357 aa).

Belongs to the AIR synthase family.

Its subcellular location is the cytoplasm. It carries out the reaction 2-formamido-N(1)-(5-O-phospho-beta-D-ribosyl)acetamidine + ATP = 5-amino-1-(5-phospho-beta-D-ribosyl)imidazole + ADP + phosphate + H(+). Its pathway is purine metabolism; IMP biosynthesis via de novo pathway; 5-amino-1-(5-phospho-D-ribosyl)imidazole from N(2)-formyl-N(1)-(5-phospho-D-ribosyl)glycinamide: step 2/2. This is Phosphoribosylformylglycinamidine cyclo-ligase from Rhizobium etli (strain CIAT 652).